Here is a 524-residue protein sequence, read N- to C-terminus: Tyrosine-protein kinase HCK (524 aa).

2 disordered regions span residues 1-20 and 35-71; these read MGGR…GRVP and KASK…LPPG. Glycine 2 carries the N-myristoyl glycine lipid modification. Glycine 3 carries S-palmitoyl cysteine lipidation. At tyrosine 50 the chain carries Phosphotyrosine; by autocatalysis. One can recognise an SH3 domain in the interval 76 to 136; sequence SEDTIVVALY…PSNYVARVNS (61 aa). The region spanning 142–239 is the SH2 domain; sequence WFFKGISRKD…GLCQKLSVPC (98 aa). Threonine 200 is subject to Phosphothreonine. The residue at position 207 (tyrosine 207) is a Phosphotyrosine. Residues 260–513 enclose the Protein kinase domain; that stretch reads LQMEKKLGAG…YIQSVLDDFY (254 aa). Residues 266–274 and lysine 288 contribute to the ATP site; that span reads LGAGQFGEV. Residue aspartate 379 is the Proton acceptor of the active site. Phosphotyrosine; by autocatalysis is present on tyrosine 409. Phosphoserine is present on serine 460. Tyrosine 520 carries the post-translational modification Phosphotyrosine.

Belongs to the protein kinase superfamily. Tyr protein kinase family. SRC subfamily. As to quaternary structure, interacts with ADAM15. Interacts with FASLG. Interacts with ARRB1 and ARRB2. Interacts with FCGR1A; the interaction may be indirect. Interacts with IL6ST. Interacts (via SH3 domain) with ELMO1. Interacts (via SH3 domain) with TP73. Interacts with YAP1. Interacts with ABL1 and ITGB1, and thereby recruits ABL1 to activated ITGB1. Interacts (via SH2 domain) with FLT3 (tyrosine phosphorylated). Interacts with CBL. Interacts with VAV1, WAS and RAPGEF1. Interacts (via SH3 domain) with WDCP. Post-translationally, phosphorylated on several tyrosine residues. Autophosphorylated. Becomes rapidly phosphorylated upon activation of the immunoglobulin receptors FCGR1A and FCGR2A. Phosphorylation at Tyr-409 increases kinase activity. Phosphorylation at Tyr-520 inhibits kinase activity. Kinase activity is not required for phosphorylation at Tyr-520, suggesting that this site may be a target of other kinases. Ubiquitinated by CBL, leading to its degradation via the proteasome. In terms of processing, isoform 2 palmitoylation at position 2 requires prior myristoylation. Palmitoylation at position 3 is required for caveolar localization of isoform 2. In terms of tissue distribution, expressed strongly in spleen and at very low levels in thymus.

The protein resides in the cytoplasmic vesicle. It localises to the secretory vesicle. It is found in the cytoplasm. Its subcellular location is the cytosol. The protein localises to the membrane. The protein resides in the caveola. It localises to the lysosome. It is found in the cell projection. Its subcellular location is the podosome membrane. The protein localises to the cell membrane. The protein resides in the cell junction. It localises to the focal adhesion. It is found in the cytoskeleton. Its subcellular location is the golgi apparatus. The protein localises to the nucleus. It catalyses the reaction L-tyrosyl-[protein] + ATP = O-phospho-L-tyrosyl-[protein] + ADP + H(+). Subject to autoinhibition, mediated by intramolecular interactions involving the SH2 and SH3 domains. Kinase activity is also regulated by phosphorylation at regulatory tyrosine residues. Phosphorylation at Tyr-409 is required for optimal activity. Phosphorylation at Tyr-520 inhibits kinase activity. In terms of biological role, non-receptor tyrosine-protein kinase found in hematopoietic cells that transmits signals from cell surface receptors and plays an important role in the regulation of innate immune responses, including neutrophil, monocyte, macrophage and mast cell functions, phagocytosis, cell survival and proliferation, cell adhesion and migration. Acts downstream of receptors that bind the Fc region of immunoglobulins, such as FCGR1A and FCGR2A, but also CSF3R, PLAUR, the receptors for IFNG, IL2, IL6 and IL8, and integrins, such as ITGB1 and ITGB2. During the phagocytic process, mediates mobilization of secretory lysosomes, degranulation, and activation of NADPH oxidase to bring about the respiratory burst. Plays a role in the release of inflammatory molecules. Promotes reorganization of the actin cytoskeleton and actin polymerization, formation of podosomes and cell protrusions. Inhibits TP73-mediated transcription activation and TP73-mediated apoptosis. Phosphorylates CBL in response to activation of immunoglobulin gamma Fc region receptors. Phosphorylates ADAM15, BCR, ELMO1, FCGR2A, GAB1, GAB2, RAPGEF1, STAT5B, TP73, VAV1 and WAS. The sequence is that of Tyrosine-protein kinase HCK (Hck) from Rattus norvegicus (Rat).